The following is a 149-amino-acid chain: 1,4-dihydroxy-2-naphthoyl-CoA hydrolase (149 aa).

Asp-19 is an active-site residue.

Belongs to the 4-hydroxybenzoyl-CoA thioesterase family. DHNA-CoA hydrolase subfamily.

The catalysed reaction is 1,4-dihydroxy-2-naphthoyl-CoA + H2O = 1,4-dihydroxy-2-naphthoate + CoA + H(+). Its pathway is cofactor biosynthesis; phylloquinone biosynthesis. It functions in the pathway quinol/quinone metabolism; 1,4-dihydroxy-2-naphthoate biosynthesis; 1,4-dihydroxy-2-naphthoate from chorismate: step 7/7. In terms of biological role, catalyzes the hydrolysis of 1,4-dihydroxy-2-naphthoyl-CoA (DHNA-CoA) to 1,4-dihydroxy-2-naphthoate (DHNA), a reaction involved in phylloquinone (vitamin K1) biosynthesis. The protein is 1,4-dihydroxy-2-naphthoyl-CoA hydrolase of Synechococcus sp. (strain CC9902).